The sequence spans 572 residues: Sulfite reductase [NADPH] hemoprotein beta-component (572 aa).

[4Fe-4S] cluster is bound by residues Cys-437, Cys-443, Cys-482, and Cys-486. Cys-486 contacts siroheme.

Belongs to the nitrite and sulfite reductase 4Fe-4S domain family. As to quaternary structure, alpha(8)-beta(8). The alpha component is a flavoprotein, the beta component is a hemoprotein. The cofactor is siroheme. Requires [4Fe-4S] cluster as cofactor.

The catalysed reaction is hydrogen sulfide + 3 NADP(+) + 3 H2O = sulfite + 3 NADPH + 4 H(+). It participates in sulfur metabolism; hydrogen sulfide biosynthesis; hydrogen sulfide from sulfite (NADPH route): step 1/1. Functionally, component of the sulfite reductase complex that catalyzes the 6-electron reduction of sulfite to sulfide. This is one of several activities required for the biosynthesis of L-cysteine from sulfate. The protein is Sulfite reductase [NADPH] hemoprotein beta-component of Bacillus licheniformis (strain ATCC 14580 / DSM 13 / JCM 2505 / CCUG 7422 / NBRC 12200 / NCIMB 9375 / NCTC 10341 / NRRL NRS-1264 / Gibson 46).